The sequence spans 117 residues: Glycine cleavage system H-like protein (117 aa).

Residues 21–103 enclose the Lipoyl-binding domain; the sequence is IVKLGLSSQM…ESEGWFVVLQ (83 aa). Lys-62 bears the N6-lipoyllysine mark.

Belongs to the GcvH family. (R)-lipoate is required as a cofactor.

The protein is Glycine cleavage system H-like protein of Chlamydia trachomatis serovar D (strain ATCC VR-885 / DSM 19411 / UW-3/Cx).